Reading from the N-terminus, the 195-residue chain is Flagellar transcriptional regulator FlhC (195 aa).

Zn(2+) contacts are provided by Cys-137, Cys-140, Cys-157, and Cys-160. Residues 165 to 195 (RAGSARRKTTTRKAVAPTHKTTAASRKAVVA) are disordered.

It belongs to the FlhC family. As to quaternary structure, heterohexamer composed of two FlhC and four FlhD subunits. Each FlhC binds a FlhD dimer, forming a heterotrimer, and a hexamer assembles by dimerization of two heterotrimers. Zn(2+) serves as cofactor.

The protein localises to the cytoplasm. Functions in complex with FlhD as a master transcriptional regulator that regulates transcription of several flagellar and non-flagellar operons by binding to their promoter region. Activates expression of class 2 flagellar genes, including fliA, which is a flagellum-specific sigma factor that turns on the class 3 genes. Also regulates genes whose products function in a variety of physiological pathways. The protein is Flagellar transcriptional regulator FlhC of Thauera aminoaromatica.